A 1349-amino-acid chain; its full sequence is MQKEEDVCPEAGYCLGTALSSWGLHFMEEHSQSTMLMGIGIGVLLTLAFVGLAAFFVYRKVSRFRRAEPIPQYRFRKRDKVMFYGRKIMRKVTTLPHTLVGNTAAPRQRVRKRTKVLSLAKRILRFKKEYPTLQPKEPPPSLLEADLTEFDVKNSHLPSEVLYMLKNVRVLGHFEKPLFLELCKHMVFVQLQEGEHVFQPGEPDISIYVVQDGRLEVCIQDADGTEVVVKEVLPGDSVHSLLSILDVITGHTAPYKTVSARAAVASTVLWLPAAAFQGVFEKYPETLVRVVQIIMVRLQRVTFLALHNYLGLTTELFNPESQAIPLLSVASVAGRAKRQMSYGPEEQLERSPRLSEFNSSDQRSVAVSGPLLKRSCSVPLPPIHGEIDELRQAQGSGSNTSAFQESQEGATSDLGMAYNRARILPHSEEQLGSSLASKSKKSVVAETSAVFHYSEKPRDEPGPSGRTDAIFRAATKDLLTLMKLDDPSLLDGRVAFLHVPAGTIVSKQGDQDVNILFVVSGMLHVYQQKIDSLEDTCLFLTHPGEMVGQLAVLTGEPLMFTIRANRDCSFLSISKAHFYEIMRKRPDVVLGVAHTVVRRMSSFVRQIDFALDWMEVEAGRAIYRQGDKSDCTYIVLSGRLRSVIRKDDGKKRLAGEYGRGDLVGVVEMLTHQARATTVHAVRDSELAKLPAGALTSIKRRYPQVVTRLIHLLGEKILGSLQQGSGTGHQLGFNTASSKWDLGNPPGNLSTVAAMPVSEDVPLTAFALELQHALSAIGPVLLLTSDNIKQRLGSAALDSIHEYRLSSWLGQQEDIHRIVLYQADSTLTPWTQRCIRQADCILIVGLGDQEPALGELEQMLESTAVRAQKQLILLHKEEGPAPSRTVEWLNMRSWCSGHLHLCCPRRVFSKRSLPKLVEMYTRIFQRPPDRHSDFSRLARILTGNAIALVLGGGGARGCAQVGILRALAECGIPVDIIGGTSIGAFMGALFAEERSYSQIRIRAKQWAEDMTSMVKTILDLTYPITSMFSGTGFNSSISNIFKDRQIEDLWLPYFAITTDITASAMRVHTDGALWRYVRASMSLSGYMPPLCDPKDGHLLMDGGYINNLPADVARSMGAKVVIAIDVGSRDETDLTNYGDALSGWWLLWKRWNPLATKVKVLNMAEIQTRLAYVCCVRQLEMVKNSDYCEYLRPPIDSYRTLDFGKFDEICEVGYQHGPAGFDIWVRSGVLEKMLQDQQGTSKRMDCGVFTCPNSSFTDLAEIVSRIEPAKVAAVDDESDYQTEYEEELPAIPKETYADFQSTGIELDSDSECEPSMSQGPHSLTSPKQSQDSFPWLPNQDDQGPRLYRPS.

The Lumenal portion of the chain corresponds to 1–36 (MQKEEDVCPEAGYCLGTALSSWGLHFMEEHSQSTML). Residues 37-57 (MGIGIGVLLTLAFVGLAAFFV) form a helical membrane-spanning segment. The Cytoplasmic portion of the chain corresponds to 58–1349 (YRKVSRFRRA…DQGPRLYRPS (1292 aa)). 170–297 (VLGHFEKPLF…VRVVQIIMVR (128 aa)) serves as a coordination point for a nucleoside 3',5'-cyclic phosphate. A disordered region spans residues 340-361 (MSYGPEEQLERSPRLSEFNSSD). Phosphoserine occurs at positions 341 and 377. A nucleoside 3',5'-cyclic phosphate contacts are provided by residues 496 to 599 (FLHV…VVRR) and 610 to 715 (ALDW…LGEK). Residues 678–964 (VHAVRDSELA…RGCAQVGILR (287 aa)) are involved in the binding to lipid droplets. In terms of domain architecture, PNPLA spans 947–1113 (LVLGGGGARG…INNLPADVAR (167 aa)). A GXGXXG motif is present at residues 951-956 (GGGARG). The GXSXG signature appears at 978–982 (GTSIG). Serine 980 serves as the catalytic Nucleophile. The active-site Proton acceptor is aspartate 1100. A DGA/G motif is present at residues 1100–1102 (DGG). At serine 1277 the chain carries Phosphoserine. Residue threonine 1281 is modified to Phosphothreonine. Positions 1297–1349 (DFQSTGIELDSDSECEPSMSQGPHSLTSPKQSQDSFPWLPNQDDQGPRLYRPS) are disordered. Positions 1314-1331 (SMSQGPHSLTSPKQSQDS) are enriched in polar residues.

This sequence belongs to the NTE family. In terms of tissue distribution, expressed in the brain, liver, kidney, lung and testis.

It is found in the endoplasmic reticulum membrane. It localises to the lipid droplet. The enzyme catalyses a 1-acyl-sn-glycero-3-phosphocholine + H2O = sn-glycerol 3-phosphocholine + a fatty acid + H(+). The catalysed reaction is 1-(9Z-octadecenoyl)-sn-glycero-3-phosphocholine + H2O = sn-glycerol 3-phosphocholine + (9Z)-octadecenoate + H(+). It carries out the reaction 1-(9Z-octadecenoyl)-sn-glycero-3-phosphoethanolamine + H2O = sn-glycero-3-phosphoethanolamine + (9Z)-octadecenoate + H(+). It catalyses the reaction 1-(9Z-octadecenoyl)-sn-glycero-3-phospho-L-serine + H2O = sn-glycero-3-phospho-L-serine + (9Z)-octadecenoate + H(+). The enzyme catalyses 1-hexadecanoyl-sn-glycero-3-phosphocholine + H2O = sn-glycerol 3-phosphocholine + hexadecanoate + H(+). The catalysed reaction is 1-hexadecanoyl-sn-glycero-3-phosphate + H2O = sn-glycerol 3-phosphate + hexadecanoate + H(+). Lysophospholipase which preferentially deacylates unsaturated lysophosphatidylcholine (C18:1), generating glycerophosphocholine. Also can deacylate, to a lesser extent, lysophosphatidylethanolamine (C18:1), lysophosphatidyl-L-serine (C18:1) and lysophosphatidic acid (C16:0). This chain is Patatin-like phospholipase domain-containing protein 7 (Pnpla7), found in Rattus norvegicus (Rat).